Reading from the N-terminus, the 264-residue chain is ORC1-type DNA replication protein 2 (264 aa).

Residues 73 to 77 (TGKSL), Y220, and R232 each bind ATP.

Belongs to the CDC6/cdc18 family.

Involved in regulation of DNA replication. This Halobacterium salinarum (strain ATCC 700922 / JCM 11081 / NRC-1) (Halobacterium halobium) protein is ORC1-type DNA replication protein 2 (orc2).